A 172-amino-acid chain; its full sequence is MKLGIVIFPSKMIQDKANGLRKRYDPHYALVPPHITLKTPFETQDEQLESIVNELHTIAGKTNPFTLHVGKVGSFAPVNNVLYFKVEKTPELTFLNEEMHGGLFTQEREYAFVPHLTIGQGLSDAEHADVLGRLRMKDFYYEQPIDRFHLLYQLENGTWTVHETFHLGKGNN.

Residue H34 is the Proton donor of the active site. 2 consecutive short sequence motifs (HXTX) follow at residues 34–37 (HITL) and 115–118 (HLTI). The active-site Proton acceptor is the H115.

This sequence belongs to the 2H phosphoesterase superfamily. YjcG family.

This is Putative phosphoesterase BCG9842_B4061 from Bacillus cereus (strain G9842).